Reading from the N-terminus, the 133-residue chain is DNA-directed RNA polymerases I and III subunit RPAC2 (133 aa).

Methionine 1 carries the post-translational modification N-acetylmethionine. A disordered region spans residues 1-22; sequence MEEDQELERKMSGVKTSMAEGE.

Belongs to the archaeal Rpo11/eukaryotic RPB11/RPC19 RNA polymerase subunit family. In terms of assembly, component of the RNA polymerase I and RNA polymerase III complexes consisting of at least 13 and 17 subunits, respectively. The transcriptionally active RNA polymerase III complex consists of a ten-subunit horseshoe-shaped catalytic core composed of POLR3A/RPC1, POLR3B/RPC2, POLR1C/RPAC1, POLR1D/RPAC2, POLR3K/RPC10, POLR2E/RPABC1, POLR2F/RPABC2, POLR2H/RPABC3, POLR2K/RPABC4 and POLR2L/RPABC5; a mobile stalk composed of two subunits POLR3H/RPC8 and CRCP/RPC9, protruding from the core and functioning primarily in transcription initiation; and additional subunits homologous to general transcription factors of the RNA polymerase II machinery, POLR3C/RPC3-POLR3F/RPC6-POLR3G/RPC7 heterotrimer required for transcription initiation and POLR3D/RPC4-POLR3E/RPC5 heterodimer involved in both transcription initiation and termination.

It localises to the nucleus. In terms of biological role, DNA-dependent RNA polymerase catalyzes the transcription of DNA into RNA using the four ribonucleoside triphosphates as substrates. Common component of RNA polymerases I and III which synthesize ribosomal RNA precursor pre-rRNA and short non-coding RNAs including 5S rRNA, snRNAs, tRNAs and miRNAs, respectively. This is DNA-directed RNA polymerases I and III subunit RPAC2 (POLR1D) from Bos taurus (Bovine).